The primary structure comprises 97 residues: Aspartyl/glutamyl-tRNA(Asn/Gln) amidotransferase subunit C (97 aa).

A compositionally biased stretch (low complexity) spans T74–A84. The tract at residues T74–E97 is disordered.

This sequence belongs to the GatC family. Heterotrimer of A, B and C subunits.

It carries out the reaction L-glutamyl-tRNA(Gln) + L-glutamine + ATP + H2O = L-glutaminyl-tRNA(Gln) + L-glutamate + ADP + phosphate + H(+). The enzyme catalyses L-aspartyl-tRNA(Asn) + L-glutamine + ATP + H2O = L-asparaginyl-tRNA(Asn) + L-glutamate + ADP + phosphate + 2 H(+). Its function is as follows. Allows the formation of correctly charged Asn-tRNA(Asn) or Gln-tRNA(Gln) through the transamidation of misacylated Asp-tRNA(Asn) or Glu-tRNA(Gln) in organisms which lack either or both of asparaginyl-tRNA or glutaminyl-tRNA synthetases. The reaction takes place in the presence of glutamine and ATP through an activated phospho-Asp-tRNA(Asn) or phospho-Glu-tRNA(Gln). The chain is Aspartyl/glutamyl-tRNA(Asn/Gln) amidotransferase subunit C from Anaeromyxobacter dehalogenans (strain 2CP-1 / ATCC BAA-258).